We begin with the raw amino-acid sequence, 781 residues long: Catenin beta-1 (781 aa).

A2 carries the post-translational modification N-acetylalanine. Residues 2 to 23 (ATQADLMELDMAMEPDRKAAVS) are interaction with VCL. S23 bears the Phosphoserine; by GSK3-beta; alternate mark. O-linked (GlcNAc) serine; alternate glycosylation occurs at S23. S29 is subject to Phosphoserine; by GSK3-beta. 2 positions are modified to phosphoserine; by GSK3-beta and HIPK2: S33 and S37. Residues 34–57 (GIHSGATTTAPSLSGKGNPEEEDV) are disordered. T41 is subject to Phosphothreonine; by GSK3-beta. Phosphoserine is present on S45. K49 carries the post-translational modification N6-acetyllysine. Y64 carries the phosphotyrosine; by PTK6 modification. Y142 carries the phosphotyrosine; by FYN and PTK6 modification. ARM repeat units follow at residues 151–191 (RAIP…IMRS), 193–234 (QMVS…IFKS), 235–276 (GGIP…VRLA), 277–318 (GGLQ…ILAS), 319–360 (GGPQ…IVEA), 361–389 (GGMQALGLHLTDPSQRLVQNCLWTLRNLS), 400–441 (GLLG…VCQV), 442–484 (GGIE…AQNA), 489–530 (YGLP…LREQ), 531–571 (GAIP…EIVE), 594–636 (NTIP…AEGA), and 637–666 (TAPLTELLHSRNEGVATYAAAVLFRMSEDK). The segment at 156–178 (LTKLLNDEDQVVVNKAAVMVHQL) is interaction with BCL9. S191 carries the post-translational modification Phosphoserine; by CDK5. Phosphoserine; by CDK5 is present on S246. Y331 carries the phosphotyrosine; by PTK6 modification. A Phosphotyrosine; by SRC and PTK6 modification is found at Y333. Residue S552 is modified to Phosphoserine. T556 carries the (Microbial infection) Phosphothreonine modification. At T556 the chain carries Phosphothreonine. An S-nitrosocysteine modification is found at C619. S675 carries the post-translational modification Phosphoserine. The interval 705-781 (EPLGYRQDDP…NQLAWFDTDL (77 aa)) is disordered. The span at 734-745 (MMEHEMGGHHPG) shows a compositional bias: basic and acidic residues. Residues 772–781 (NQLAWFDTDL) form an interaction with SCRIB region.

This sequence belongs to the beta-catenin family. In terms of assembly, two separate complex-associated pools are found in the cytoplasm. The majority is present as component of an E-cadherin:catenin adhesion complex composed of at least E-cadherin/CDH1 and beta-catenin/CTNNB1, and possibly alpha-catenin/CTNNA1; the complex is located to adherens junctions. The stable association of CTNNA1 is controversial as CTNNA1 was shown not to bind to F-actin when assembled in the complex. Alternatively, the CTNNA1-containing complex may be linked to F-actin by other proteins such as LIMA1. Another cytoplasmic pool is part of a large complex containing AXIN1, AXIN2, APC, CSNK1A1 and GSK3B that promotes phosphorylation on N-terminal Ser and Thr residues and ubiquitination of CTNNB1 via BTRC and its subsequent degradation by the proteasome. Wnt-dependent activation of DVL antagonizes the action of GSK3B. When GSK3B activity is inhibited the complex dissociates, CTNNB1 is dephosphorylated and is no longer targeted for destruction. The stabilized protein translocates to the nucleus, where it binds TCF/LEF-1 family members, BCL9, BCL9L and possibly also RUVBL1 and CHD8. Binds CTNNBIP and EP300. CTNNB1 forms a ternary complex with LEF1 and EP300 that is disrupted by CTNNBIP1 binding. Interacts with TAX1BP3 (via the PDZ domain); this interaction inhibits the transcriptional activity of CTNNB1. Interacts with AJAP1, BAIAP1, CARM1, CTNNA3, CXADR and PCDH11Y. Binds NHERF1. Interacts with GLIS2 and MUC1. Interacts with SLC30A9. Interacts with XIRP1. Interacts directly with AXIN1; the interaction is regulated by CDK2 phosphorylation of AXIN1. Interacts with SCRIB. Interacts with RAPGEF2. Interacts with PTPRU (via the cytoplasmic juxtamembrane domain). Interacts with EMD. Interacts with TNIK and TCF7L2. Interacts with SESTD1 and TRPC4. Interacts with CAV1. Interacts with TRPV4. The TRPV4 and CTNNB1 complex can interact with CDH1. Interacts with VCL. Interacts with PTPRJ. Interacts with PKT7 and CDK2. Interacts with FAT1 (via the cytoplasmic domain). Interacts with NANOS1 and NDRG2. Interacts with isoform 1 of NEK2. Interacts with both isoform 1 and isoform 2 of CDK5. Interacts with PTK6. Interacts with SOX7; this interaction may lead to proteasomal degradation of active CTNNB1 and thus inhibition of Wnt/beta-catenin-stimulated transcription. Identified in a complex with HINT1 and MITF. Interacts with FHIT. The CTNNB1 and TCF7L2/TCF4 complex interacts with PML (isoform PML-4). Interacts with FERMT2. Identified in a complex with TCF7L2/TCF4 and FERMT2. Interacts with RORA. May interact with P-cadherin/CDH3. Interacts with RNF220. Interacts with CTNND2. Interacts (via the C-terminal region) with CBY1. The complex composed, at least, of APC, CTNNB1 and GSK3B interacts with JPT1; the interaction requires the inactive form of GSK3B (phosphorylated at 'Ser-9'). Interacts with DLG5. Interacts with FAM53B; promoting translocation to the nucleus. Interacts with TMEM170B. Interacts with AHI1. Interacts with GID8. Component of an cadherin:catenin adhesion complex composed of at least of CDH26, beta-catenin/CTNNB1, alpha-catenin/CTNNA1 and p120 catenin/CTNND1. Forms a complex comprising APPL1, RUVBL2, APPL2, HDAC1 and HDAC2. Interacts with IRF2BPL; mediates the ubiquitination and degradation of CTNNB1. Interacts with AMFR. Interacts with LMBR1L. Interacts with SOX30; prevents interaction of CTNNB1 with TCF7L2/TCF4 and leads to inhibition of Wnt signaling. Interacts with SOX9; inhibiting CTNNB1 activity by competing with the binding sites of TCF/LEF within CTNNB1, thereby inhibiting the Wnt signaling. Interacts with SPN/CD43 cytoplasmic tail. Interacts (when phosphorylated at Tyr-333) with isoform M2 of PKM (PKM2); promoting transcription activation. Interacts with PKP2 (via HEAD domain). Interacts with CDH1. Interacts (when unphosphorylated) with FLYWCH1, perhaps preventing interaction of CTNNB1 with TCF4, and thereby regulating transcription activation; phosphorylation of CTNNB1 may inhibit the interaction. Interacts (via the central armadillo domains) with probable transcriptional regulator ADNP (via N-terminal region); interaction is direct and stabilizes CTNNB1 by modulating its phosphorylation by glycogen synthase kinase-3 beta GSK3B. Interacts with NR5A2. Interacts with DSG2; the interaction promotes localization of CTNNB1 at cell junctions thus reducing its nuclear localization and subsequent transcription of CTNNB1/TCF-target genes. (Microbial infection) Interacts with herpes virus 8 protein vPK; this interaction inhibits the Wnt signaling pathway. Post-translationally, phosphorylation at Ser-552 by AMPK promotes stabilization of the protein, enhancing TCF/LEF-mediated transcription. Phosphorylation by GSK3B requires prior phosphorylation of Ser-45 by another kinase. Phosphorylation proceeds then from Thr-41 to Ser-37 and Ser-33. Phosphorylated by NEK2. EGF stimulates tyrosine phosphorylation. Phosphorylated on Ser-33 and Ser-37 by HIPK2 and GSK3B, this phosphorylation triggers proteasomal degradation. Phosphorylation on Ser-191 and Ser-246 by CDK5. Phosphorylation by CDK2 regulates insulin internalization. Phosphorylation by PTK6 at Tyr-64, Tyr-142, Tyr-331 and/or Tyr-333 with the predominant site at Tyr-64 is not essential for inhibition of transcriptional activity. Phosphorylation by SRC at Tyr-333 promotes interaction with isoform M2 of PKM (PKM2); promoting transcription activation. In terms of processing, ubiquitinated by the SCF(BTRC) E3 ligase complex when phosphorylated by GSK3B, leading to its degradation. Ubiquitinated by a E3 ubiquitin ligase complex containing UBE2D1, SIAH1, CACYBP/SIP, SKP1, APC and TBL1X, leading to its subsequent proteasomal degradation. Ubiquitinated and degraded following interaction with SOX9. Ubiquitinated via 'Lys-11'- and 'Lys-29'-linked ubiquitin chains by UBR5, leading to its stabilization. S-nitrosylation at Cys-619 within adherens junctions promotes VEGF-induced, NO-dependent endothelial cell permeability by disrupting interaction with E-cadherin, thus mediating disassembly adherens junctions. Post-translationally, O-glycosylation at Ser-23 decreases nuclear localization and transcriptional activity, and increases localization to the plasma membrane and interaction with E-cadherin CDH1. In terms of processing, deacetylated at Lys-49 by SIRT1. Phosphorylated at Thr-556 by herpes virus 1/HHV-1 leading to CTNNB1 inhibition. As to expression, expressed in several hair follicle cell types: basal and peripheral matrix cells, and cells of the outer and inner root sheaths. Expressed in colon. Present in cortical neurons (at protein level). Expressed in breast cancer tissues (at protein level).

The protein resides in the cytoplasm. It is found in the nucleus. Its subcellular location is the cytoskeleton. The protein localises to the cell junction. It localises to the adherens junction. The protein resides in the cell membrane. It is found in the microtubule organizing center. Its subcellular location is the centrosome. The protein localises to the spindle pole. It localises to the synapse. The protein resides in the cilium basal body. Functionally, key downstream component of the canonical Wnt signaling pathway. In the absence of Wnt, forms a complex with AXIN1, AXIN2, APC, CSNK1A1 and GSK3B that promotes phosphorylation on N-terminal Ser and Thr residues and ubiquitination of CTNNB1 via BTRC and its subsequent degradation by the proteasome. In the presence of Wnt ligand, CTNNB1 is not ubiquitinated and accumulates in the nucleus, where it acts as a coactivator for transcription factors of the TCF/LEF family, leading to activate Wnt responsive genes. Also acts as a coactivator for other transcription factors, such as NR5A2. Promotes epithelial to mesenchymal transition/mesenchymal to epithelial transition (EMT/MET) via driving transcription of CTNNB1/TCF-target genes. Involved in the regulation of cell adhesion, as component of an E-cadherin:catenin adhesion complex. Acts as a negative regulator of centrosome cohesion. Involved in the CDK2/PTPN6/CTNNB1/CEACAM1 pathway of insulin internalization. Blocks anoikis of malignant kidney and intestinal epithelial cells and promotes their anchorage-independent growth by down-regulating DAPK2. Disrupts PML function and PML-NB formation by inhibiting RANBP2-mediated sumoylation of PML. Promotes neurogenesis by maintaining sympathetic neuroblasts within the cell cycle. Involved in chondrocyte differentiation via interaction with SOX9: SOX9-binding competes with the binding sites of TCF/LEF within CTNNB1, thereby inhibiting the Wnt signaling. Acts as a positive regulator of odontoblast differentiation during mesenchymal tooth germ formation, via promoting the transcription of differentiation factors such as LEF1, BMP2 and BMP4. Activity is repressed in a MSX1-mediated manner at the bell stage of mesenchymal tooth germ formation which prevents premature differentiation of odontoblasts. This chain is Catenin beta-1, found in Homo sapiens (Human).